Reading from the N-terminus, the 508-residue chain is Lysine--tRNA ligase (508 aa).

Positions 418 and 425 each coordinate Mg(2+).

It belongs to the class-II aminoacyl-tRNA synthetase family. As to quaternary structure, homodimer. Mg(2+) serves as cofactor.

Its subcellular location is the cytoplasm. It catalyses the reaction tRNA(Lys) + L-lysine + ATP = L-lysyl-tRNA(Lys) + AMP + diphosphate. This chain is Lysine--tRNA ligase, found in Burkholderia pseudomallei (strain K96243).